The following is a 191-amino-acid chain: Adenylate kinase (191 aa).

11–16 contacts ATP; the sequence is GAGKGT. The tract at residues 31–60 is NMP; the sequence is STGDILRSNVAERSPLGIKAKDYMDKGDLV. Residues T32, R37, 58-60, 86-89, and Q93 each bind AMP; these read DLV and GFPR. The segment at 132 to 138 is LID; sequence SRKREDD. R133 lines the ATP pocket. Residues R135 and R146 each coordinate AMP. ATP is bound at residue N174.

Belongs to the adenylate kinase family. In terms of assembly, monomer.

The protein localises to the cytoplasm. It catalyses the reaction AMP + ATP = 2 ADP. It functions in the pathway purine metabolism; AMP biosynthesis via salvage pathway; AMP from ADP: step 1/1. Functionally, catalyzes the reversible transfer of the terminal phosphate group between ATP and AMP. Plays an important role in cellular energy homeostasis and in adenine nucleotide metabolism. The protein is Adenylate kinase of Trichodesmium erythraeum (strain IMS101).